Consider the following 511-residue polypeptide: Probable DNA ligase (511 aa).

Glutamate 209 is an ATP binding site. Residue lysine 211 is the N6-AMP-lysine intermediate of the active site. The ATP site is built by arginine 216, arginine 231, glutamate 260, phenylalanine 299, arginine 371, and lysine 377.

The protein belongs to the ATP-dependent DNA ligase family. Mg(2+) serves as cofactor.

The catalysed reaction is ATP + (deoxyribonucleotide)n-3'-hydroxyl + 5'-phospho-(deoxyribonucleotide)m = (deoxyribonucleotide)n+m + AMP + diphosphate.. Its function is as follows. DNA ligase that seals nicks in double-stranded DNA during DNA replication, DNA recombination and DNA repair. This chain is Probable DNA ligase, found in Mycolicibacterium gilvum (strain PYR-GCK) (Mycobacterium gilvum (strain PYR-GCK)).